The sequence spans 240 residues: Triosephosphate isomerase (240 aa).

8-10 (NWK) lines the substrate pocket. Histidine 93 serves as the catalytic Electrophile. Glutamate 160 acts as the Proton acceptor in catalysis. Glycine 166 serves as a coordination point for substrate.

The protein belongs to the triosephosphate isomerase family. In terms of assembly, homodimer.

The protein localises to the cytoplasm. The enzyme catalyses D-glyceraldehyde 3-phosphate = dihydroxyacetone phosphate. The protein operates within carbohydrate biosynthesis; gluconeogenesis. Its pathway is carbohydrate degradation; glycolysis; D-glyceraldehyde 3-phosphate from glycerone phosphate: step 1/1. Functionally, involved in the gluconeogenesis. Catalyzes stereospecifically the conversion of dihydroxyacetone phosphate (DHAP) to D-glyceraldehyde-3-phosphate (G3P). This chain is Triosephosphate isomerase, found in Ehrlichia chaffeensis (strain ATCC CRL-10679 / Arkansas).